The chain runs to 191 residues: Chromobox protein homolog 5 (191 aa).

Positions 1-21 (MGKKTKRTADSSSSEDEEEYV) are disordered. Residues Ser11, Ser12, Ser13, and Ser14 each carry the phosphoserine modification. Residues 20–78 (YVVEKVLDRRMVKGQVEYLLKWKGFSEEHNTWEPEKNLDCPELISEFMKKYKKMKEGEN) form the Chromo 1 domain. Residue Lys32 forms a Glycyl lysine isopeptide (Lys-Gly) (interchain with G-Cter in SUMO2) linkage. An N6-acetyllysine modification is found at Lys40. The tract at residues 70–117 (YKKMKEGENNKPREKSEGNKRKSSFSNSADDIKSKKKREQSNDIARGF) is disordered. The segment covering 73–89 (MKEGENNKPREKSEGNK) has biased composition (basic and acidic residues). Lys91 is covalently cross-linked (Glycyl lysine isopeptide (Lys-Gly) (interchain with G-Cter in SUMO2)). Ser92, Ser93, Ser95, and Ser97 each carry phosphoserine. Glycyl lysine isopeptide (Lys-Gly) (interchain with G-Cter in SUMO2) cross-links involve residues Lys102, Lys106, Lys154, and Lys184. The 59-residue stretch at 121-179 (LEPEKIIGATDSCGDLMFLMKWKDTDEADLVLAKEANVKCPQIVIAFYEERLTWHAYPE) folds into the Chromo 2; shadow subtype domain.

As to quaternary structure, homodimer. Interacts with histone H3 methylated at 'Lys-9'. Interacts (via Chromo 2; shadow subtype domain) with the MIS12 complex subunit NSL1; the interaction is direct, involves dimeric CBX5, and occurs during interphase. Interacts with POGZ; POGZ and PXVXL motif-containing proteins such as INCENP and TRIM28 compete for interaction with CBX5. Interacts with LRIF1 (via PxVxL motif). Interacts with INCENP. Interacts with TRIM24. Interacts (via the chromoshadow domain) with ATRX; the interaction is direct. Interacts (via the chromoshadow domain) with CHAF1A; the interaction is direct. Interacts (via the chromoshadow domain) with LBR; the interaction is direct. Interacts (via the chromoshadow domain) with NIPBL; the interaction is direct. Interacts (via the chromoshadow domain) with SP100; the interaction is direct. Interacts (via the chromoshadow domain) with STAM2; the interaction is direct. Interacts (via the chromoshadow domain) with TRIM28; the interaction is direct. Interacts (via the chromoshadow domain) with CBX3; the interaction is direct. Interacts with PRR14 (via N-terminus). Interacts with RRP1B. Interacts with HNRNPU (via C-terminus); this interaction is, at least in part, RNA-dependent. Interacts with ZNF263; recruited to the SIX3 promoter along with other proteins involved in chromatin modification and transcriptional corepression where it contributes to transcriptional repression. Interacts with AURKB during mitosis. Interacts with CHAMP1. Interacts with BAHD1. Interacts with HP1BP3. Interacts with CHD3. Interacts with CHD4. Interacts with SMYD5. Interacts with KMT5B. Interacts with KMT5C. In terms of processing, phosphorylation of HP1 and LBR may be responsible for some of the alterations in chromatin organization and nuclear structure which occur at various times during the cell cycle. Phosphorylated during interphase and possibly hyper-phosphorylated during mitosis. Ubiquitinated.

It localises to the nucleus. The protein resides in the chromosome. It is found in the centromere. In terms of biological role, component of heterochromatin that recognizes and binds histone H3 tails methylated at 'Lys-9' (H3K9me), leading to epigenetic repression. In contrast, it is excluded from chromatin when 'Tyr-41' of histone H3 is phosphorylated (H3Y41ph). May contribute to the association of heterochromatin with the inner nuclear membrane by interactions with the lamin-B receptor (LBR). Involved in the formation of kinetochore through interaction with the MIS12 complex subunit NSL1. Required for the formation of the inner centromere. Functionally, component of heterochromatin that recognizes and binds histone H3 tails methylated at 'Lys-9' (H3K9me), leading to epigenetic repression. In contrast, it is excluded from chromatin when 'Tyr-41' of histone H3 is phosphorylated (H3Y41ph). Can interact with lamin-B receptor (LBR). This interaction can contribute to the association of the heterochromatin with the inner nuclear membrane. Involved in the formation of functional kinetochore through interaction with MIS12 complex proteins. In Mus musculus (Mouse), this protein is Chromobox protein homolog 5 (Cbx5).